Here is a 247-residue protein sequence, read N- to C-terminus: 3-oxoacyl-[acyl-carrier-protein] reductase (247 aa).

11-35 (VTGASRGIGKATALALAATGMKVVV) contributes to the NADP(+) binding site. Substrate is bound at residue serine 143. The active-site Proton acceptor is tyrosine 156.

It belongs to the short-chain dehydrogenases/reductases (SDR) family.

The catalysed reaction is a (3R)-hydroxyacyl-[ACP] + NADP(+) = a 3-oxoacyl-[ACP] + NADPH + H(+). Its pathway is lipid metabolism; fatty acid biosynthesis. Functionally, catalyzes the NADPH-dependent reduction of beta-ketoacyl-ACP substrates to beta-hydroxyacyl-ACP products, the first reductive step in the elongation cycle of fatty acid biosynthesis. Is capable of reducing acetoacetyl-CoA, but less well than its paralog PhaB. In Synechocystis sp. (strain ATCC 27184 / PCC 6803 / Kazusa), this protein is 3-oxoacyl-[acyl-carrier-protein] reductase (fabG).